Here is a 237-residue protein sequence, read N- to C-terminus: Bax inhibitor 1 (237 aa).

Over 1–29 the chain is Cytoplasmic; sequence MNIFDRKINFDALLKFSHITPSTQQHLKK. Lysine 7 is covalently cross-linked (Glycyl lysine isopeptide (Lys-Gly) (interchain with G-Cter in ubiquitin)). Residues 30-50 traverse the membrane as a helical segment; the sequence is VYASFALCMFVAAAGAYVHMV. At 51 to 52 the chain is on the lumenal side; sequence TH. A helical transmembrane segment spans residues 53 to 73; it reads FIQAGLLSALGSLILMIWLMA. Over 74–86 the chain is Cytoplasmic; that stretch reads TPHSHETEQKRLG. Residues 87–107 traverse the membrane as a helical segment; the sequence is LLAGFAFLTGVGLGPALEFCI. Residues 108–112 lie on the Lumenal side of the membrane; that stretch reads AVNPS. The helical transmembrane segment at 113-133 threads the bilayer; it reads ILPTAFMGTAMIFTCFTLSAL. Over 134 to 139 the chain is Cytoplasmic; the sequence is YARRRS. A helical transmembrane segment spans residues 140-160; sequence YLFLGGILMSALSLLLLSSLG. Topologically, residues 161–166 are lumenal; it reads NVFFGS. A helical membrane pass occupies residues 167–187; sequence IWLFQANLYVGLVVMCGFVLF. Topologically, residues 188–206 are cytoplasmic; the sequence is DTQLIIEKAEHGDQDYIWH. Positions 207-227 form an intramembrane region, helical; it reads CIDLFLDFITVFRKLMMILAM. The Cytoplasmic segment spans residues 228 to 237; that stretch reads NEKDKKKEKK.

It belongs to the BI1 family. In terms of assembly, interacts with BCL2 and BCL2L1. Interacts with ERN1. Post-translationally, ubiquitinated by BFAR, leading to proteasomal degradation. Highly abundant in testis.

It is found in the endoplasmic reticulum membrane. In terms of biological role, endoplasmic reticulum (ER)-resident protein that confers cellular protection as an anti-apoptotic protein by limiting multiple stress-inducing pathways surrounding the endoplasmic reticulum and mitochondria. Inhibits the activities of the key sensor for the endoplasmic reticulum unfolded protein response IRE1alpha/ERN1 both directly and by blocking BAX/BAK binding. Modulates ER calcium homeostasis by acting as a calcium-leak channel. Negatively regulates autophagy and autophagosome formation, especially during periods of nutrient deprivation, and reduces cell survival during starvation. This Homo sapiens (Human) protein is Bax inhibitor 1 (TMBIM6).